The sequence spans 428 residues: Dihydroorotase (428 aa).

2 residues coordinate Zn(2+): His-59 and His-61. Substrate contacts are provided by residues His-61–Arg-63 and Asn-93. Positions 151, 178, and 231 each coordinate Zn(2+). Asn-277 lines the substrate pocket. Asp-304 serves as a coordination point for Zn(2+). The active site involves Asp-304. Substrate contacts are provided by residues His-308 and Phe-322 to Gly-323.

It belongs to the metallo-dependent hydrolases superfamily. DHOase family. Class I DHOase subfamily. It depends on Zn(2+) as a cofactor.

The catalysed reaction is (S)-dihydroorotate + H2O = N-carbamoyl-L-aspartate + H(+). It participates in pyrimidine metabolism; UMP biosynthesis via de novo pathway; (S)-dihydroorotate from bicarbonate: step 3/3. Its function is as follows. Catalyzes the reversible cyclization of carbamoyl aspartate to dihydroorotate. This is Dihydroorotase from Bacillus cereus (strain ZK / E33L).